A 348-amino-acid chain; its full sequence is Fe(3+) ions import ATP-binding protein FbpC (348 aa).

The region spanning 7–237 is the ABC transporter domain; it reads VELRNVTKRF…PASRFMASFM (231 aa). ATP is bound at residue 39–46; the sequence is GPSGCGKT.

It belongs to the ABC transporter superfamily. Fe(3+) ion importer (TC 3.A.1.10) family. The complex is composed of two ATP-binding proteins (FbpC), two transmembrane proteins (FbpB) and a solute-binding protein (FbpA).

It localises to the cell inner membrane. It carries out the reaction Fe(3+)(out) + ATP + H2O = Fe(3+)(in) + ADP + phosphate + H(+). Its function is as follows. Part of the ABC transporter complex FbpABC involved in Fe(3+) ions import. Responsible for energy coupling to the transport system. This chain is Fe(3+) ions import ATP-binding protein FbpC, found in Escherichia coli O157:H7.